The following is a 195-amino-acid chain: Probable DNA-directed RNA polymerase subunit delta (195 aa).

Residues 14–81 enclose the HTH HARE-type domain; that stretch reads FALVEIATAI…GNNEWALRAW (68 aa). Composition is skewed to acidic residues over residues 120-172 and 181-195; these read DDDV…DESI and GGDDLDDLSDGDQEK. Positions 120-195 are disordered; the sequence is DDDVIDYNDD…DDLSDGDQEK (76 aa).

The protein belongs to the RpoE family. As to quaternary structure, RNAP is composed of a core of 2 alpha, a beta and a beta' subunits. The core is associated with a delta subunit and one of several sigma factors.

Participates in both the initiation and recycling phases of transcription. In the presence of the delta subunit, RNAP displays an increased specificity of transcription, a decreased affinity for nucleic acids, and an increased efficiency of RNA synthesis because of enhanced recycling. The chain is Probable DNA-directed RNA polymerase subunit delta from Leuconostoc mesenteroides subsp. mesenteroides (strain ATCC 8293 / DSM 20343 / BCRC 11652 / CCM 1803 / JCM 6124 / NCDO 523 / NBRC 100496 / NCIMB 8023 / NCTC 12954 / NRRL B-1118 / 37Y).